The chain runs to 449 residues: N-succinylarginine dihydrolase (449 aa).

Substrate is bound by residues 19–28 (GGLSYGNVAS), Asn-110, and 137–138 (HR). The interval 23–43 (YGNVASQSNSQQASNPREAAR) is disordered. Residues 27–37 (ASQSNSQQASN) show a composition bias toward low complexity. Glu-174 is an active-site residue. Arg-214 contributes to the substrate binding site. His-250 is a catalytic residue. Substrate is bound by residues Asp-252 and Asn-365. Cys-371 functions as the Nucleophile in the catalytic mechanism.

This sequence belongs to the succinylarginine dihydrolase family. In terms of assembly, homodimer.

The enzyme catalyses N(2)-succinyl-L-arginine + 2 H2O + 2 H(+) = N(2)-succinyl-L-ornithine + 2 NH4(+) + CO2. It functions in the pathway amino-acid degradation; L-arginine degradation via AST pathway; L-glutamate and succinate from L-arginine: step 2/5. In terms of biological role, catalyzes the hydrolysis of N(2)-succinylarginine into N(2)-succinylornithine, ammonia and CO(2). This chain is N-succinylarginine dihydrolase, found in Pseudomonas putida (strain ATCC 47054 / DSM 6125 / CFBP 8728 / NCIMB 11950 / KT2440).